A 264-amino-acid chain; its full sequence is Thymidylate synthase 2 (264 aa).

Arg21 serves as a coordination point for dUMP. Residue His51 coordinates (6R)-5,10-methylene-5,6,7,8-tetrahydrofolate. 126–127 contributes to the dUMP binding site; it reads RR. The active-site Nucleophile is the Cys146. Residues 166-169, Asn177, and 207-209 each bind dUMP; these read RSAD and HIY. Asp169 is a binding site for (6R)-5,10-methylene-5,6,7,8-tetrahydrofolate. Ser263 contributes to the (6R)-5,10-methylene-5,6,7,8-tetrahydrofolate binding site.

It belongs to the thymidylate synthase family. Bacterial-type ThyA subfamily. In terms of assembly, homodimer.

The protein localises to the cytoplasm. It carries out the reaction dUMP + (6R)-5,10-methylene-5,6,7,8-tetrahydrofolate = 7,8-dihydrofolate + dTMP. It participates in pyrimidine metabolism; dTTP biosynthesis. Functionally, catalyzes the reductive methylation of 2'-deoxyuridine-5'-monophosphate (dUMP) to 2'-deoxythymidine-5'-monophosphate (dTMP) while utilizing 5,10-methylenetetrahydrofolate (mTHF) as the methyl donor and reductant in the reaction, yielding dihydrofolate (DHF) as a by-product. This enzymatic reaction provides an intracellular de novo source of dTMP, an essential precursor for DNA biosynthesis. The sequence is that of Thymidylate synthase 2 from Bacillus spizizenii (strain ATCC 23059 / NRRL B-14472 / W23) (Bacillus subtilis subsp. spizizenii).